We begin with the raw amino-acid sequence, 738 residues long: NAD(P)H-quinone oxidoreductase subunit 5, chloroplastic (738 aa).

16 helical membrane-spanning segments follow: residues 9–29 (WIIP…LLLF), 40–60 (WAFP…NLSI), 89–109 (IDPL…MVLI), 125–145 (FASM…SNLI), 147–167 (IYIF…FWFT), 185–205 (GDFG…SFEF), 230–250 (AALL…HVWL), 258–278 (TPIS…FLVA), 280–300 (LLPL…IGII), 327–347 (LGYM…FHLI), 354–374 (ALLF…VGYS), 396–416 (ISFL…CFWS), 425–445 (WLYS…TAFY), 546–566 (LFPL…GIPF), 603–623 (FSVS…KPIY), and 718–738 (YLFF…FPVF).

Belongs to the complex I subunit 5 family. NDH is composed of at least 16 different subunits, 5 of which are encoded in the nucleus.

Its subcellular location is the plastid. The protein resides in the chloroplast thylakoid membrane. The enzyme catalyses a plastoquinone + NADH + (n+1) H(+)(in) = a plastoquinol + NAD(+) + n H(+)(out). The catalysed reaction is a plastoquinone + NADPH + (n+1) H(+)(in) = a plastoquinol + NADP(+) + n H(+)(out). Functionally, NDH shuttles electrons from NAD(P)H:plastoquinone, via FMN and iron-sulfur (Fe-S) centers, to quinones in the photosynthetic chain and possibly in a chloroplast respiratory chain. The immediate electron acceptor for the enzyme in this species is believed to be plastoquinone. Couples the redox reaction to proton translocation, and thus conserves the redox energy in a proton gradient. The protein is NAD(P)H-quinone oxidoreductase subunit 5, chloroplastic (ndhF) of Ligustrum vulgare (Common privet).